Here is a 267-residue protein sequence, read N- to C-terminus: 4-diphosphocytidyl-2-C-methyl-D-erythritol kinase (267 aa).

Residue Lys8 is part of the active site. 90-100 (PIGAGLGGGSS) contacts ATP. Residue Asp132 is part of the active site.

It belongs to the GHMP kinase family. IspE subfamily.

It carries out the reaction 4-CDP-2-C-methyl-D-erythritol + ATP = 4-CDP-2-C-methyl-D-erythritol 2-phosphate + ADP + H(+). The protein operates within isoprenoid biosynthesis; isopentenyl diphosphate biosynthesis via DXP pathway; isopentenyl diphosphate from 1-deoxy-D-xylulose 5-phosphate: step 3/6. Its function is as follows. Catalyzes the phosphorylation of the position 2 hydroxy group of 4-diphosphocytidyl-2C-methyl-D-erythritol. In Azobacteroides pseudotrichonymphae genomovar. CFP2, this protein is 4-diphosphocytidyl-2-C-methyl-D-erythritol kinase.